The following is a 492-amino-acid chain: Probable ATP-citrate synthase subunit 2 (492 aa).

S24 is modified (phosphoserine).

The protein in the N-terminal section; belongs to the succinate/malate CoA ligase beta subunit family. In the C-terminal section; belongs to the succinate/malate CoA ligase alpha subunit family. As to quaternary structure, composed of two subunits.

The protein localises to the cytoplasm. It localises to the nucleus. The catalysed reaction is oxaloacetate + acetyl-CoA + ADP + phosphate = citrate + ATP + CoA. Functionally, ATP citrate-lyase is the primary enzyme responsible for the synthesis of cytosolic acetyl-CoA. Has a central role in de novo lipid synthesis. The protein is Probable ATP-citrate synthase subunit 2 of Schizosaccharomyces pombe (strain 972 / ATCC 24843) (Fission yeast).